A 376-amino-acid polypeptide reads, in one-letter code: Serine-arginine protein 55 (376 aa).

Residues 4-74 (SRVYVGGLPY…ERVVVEPARG (71 aa)) enclose the RRM 1 domain. Residues 73–114 (RGTARGSNRDRYDDRYGGRRGGGGGRYNEKNKNSRSSSRYGP) form a disordered region. Over residues 79 to 89 (SNRDRYDDRYG) the composition is skewed to basic and acidic residues. In terms of domain architecture, RRM 2 spans 120-193 (YRLIVENLSS…RRIHLVEDRR (74 aa)). Position 165 is a phosphoserine (Ser-165). Basic and acidic residues predominate over residues 185–194 (RIHLVEDRRG). Residues 185-376 (RIHLVEDRRG…PDRNNESMDD (192 aa)) are disordered. A compositionally biased stretch (gly residues) spans 196 to 205 (RSGGGGGSGR). Composition is skewed to basic residues over residues 215-263 (SRSR…SRSN) and 271-283 (SKSK…RSRS). The segment covering 284 to 304 (PKRERDSRSRSRSVSKRESRS) has biased composition (basic and acidic residues).

Belongs to the splicing factor SR family. Extensively phosphorylated on serine residues in the RS domain.

It is found in the nucleus. Functionally, essential for development. May have a critical role in splicing or in controlling alternative splice site use of at least some pre-mRNA in vivo. Not required for all splicing. May play a general role in the condensation or decondensation of chromatin. This is Serine-arginine protein 55 (B52) from Drosophila melanogaster (Fruit fly).